We begin with the raw amino-acid sequence, 734 residues long: MYHTHMHESLISVTSTVSVSDASYAYARLTRRDDSDSSSSSASSTKNSKSAECTGSKQQCQLPTDSSHSTSVTVGVAVAVPVGVIIIVLAVILCIVYRRSKKEAEEDNDPDFEGDSEFLPTMKDYSPGINHLYSSDSQQDFMEKTLQQPPSDPFVGSMHSSKYNVRSATPPAIGRSWYVDPFQLPQESNDSNSLRDFAMRVQEDGLGGYKVAAESRNASQTSLHPDNFSNCTPIRASSRFQESESFRSHGSPIHNNQLSRGSATEGANKQFTFPNEDNDSSSVSEEAEVLNESNESASNDAFEFELDNSSEKTHERNLRFGKDDDNYELQDIREAEHMNDRSSSKSQDDDYYVSLLSPNEEEDIKRMKSIYQVYLDRAKTMKKEEDKADNANDISQEENRVDNIVQNPLPSIKINNNDNIDNNEVPEAKHLVKEALPLNNTNLAEYGPEMAQSQKQYPVQDTLTVNDTEAAPSNRIASSIYSEAIQPLNYQDQYQQQEQSPVYNGHTQYPGNGYSGNPQQQGYTAQFVQNPQWYGVPTPQQQQHNHPQTLETIGELPTPAYLAQSASSHSLTSFKRPNKQQLLQLQTARLNGTALNPVDHPEMFYSPTNDAYYAPQQQGQYMKFNENGAVPSPYQLRQSVVMTNPSDLTAKPSYKPAGSFRSVSATNSRNNSLTTQNNIYLQQQQQQLYNSRVSGILEETDVVQPPSVGGILPHSGSQDDLRKQLGSSHNYTVN.

The segment at 30 to 68 (TRRDDSDSSSSSASSTKNSKSAECTGSKQQCQLPTDSSH) is disordered. The segment covering 37–51 (SSSSSASSTKNSKSA) has biased composition (low complexity). Polar residues predominate over residues 53–68 (CTGSKQQCQLPTDSSH). A helical membrane pass occupies residues 72 to 96 (VTVGVAVAVPVGVIIIVLAVILCIV). Phosphoserine is present on Ser-137. Phosphothreonine is present on Thr-169. Phosphoserine is present on residues Ser-191, Ser-193, and Ser-219. Thr-221 is subject to Phosphothreonine. A phosphoserine mark is found at Ser-222 and Ser-251. A disordered region spans residues 239–327 (RFQESESFRS…LRFGKDDDNY (89 aa)). The span at 253-273 (IHNNQLSRGSATEGANKQFTF) shows a compositional bias: polar residues. Over residues 280-299 (SSSVSEEAEVLNESNESASN) the composition is skewed to low complexity. Residues 309 to 327 (SSEKTHERNLRFGKDDDNY) show a composition bias toward basic and acidic residues. Ser-369 is modified (phosphoserine). A disordered region spans residues 647–671 (DLTAKPSYKPAGSFRSVSATNSRNN). Over residues 661–671 (RSVSATNSRNN) the composition is skewed to polar residues. Ser-672 and Ser-717 each carry phosphoserine. The tract at residues 707 to 734 (SVGGILPHSGSQDDLRKQLGSSHNYTVN) is disordered. Residues 725 to 734 (LGSSHNYTVN) show a composition bias toward polar residues.

This sequence belongs to the SKG6/TOS2 family. In terms of assembly, interacts with ZDS1 and ZDS2. In terms of processing, phosphorylated by CDC28.

The protein resides in the membrane. In terms of biological role, may be involved in the polarity establishment process. Suppresses the lethality of KEX2-GAS1 double null mutant when overexpressed. The polypeptide is Protein SKG6 (SKG6) (Saccharomyces cerevisiae (strain ATCC 204508 / S288c) (Baker's yeast)).